The primary structure comprises 513 residues: Histidine ammonia-lyase (513 aa).

The 5-imidazolinone (Ala-Gly) cross-link spans 144-146; that stretch reads ASG. Serine 145 is modified (2,3-didehydroalanine (Ser)).

Belongs to the PAL/histidase family. Post-translationally, contains an active site 4-methylidene-imidazol-5-one (MIO), which is formed autocatalytically by cyclization and dehydration of residues Ala-Ser-Gly.

It localises to the cytoplasm. The catalysed reaction is L-histidine = trans-urocanate + NH4(+). It participates in amino-acid degradation; L-histidine degradation into L-glutamate; N-formimidoyl-L-glutamate from L-histidine: step 1/3. This is Histidine ammonia-lyase from Streptococcus pyogenes serotype M3 (strain ATCC BAA-595 / MGAS315).